Reading from the N-terminus, the 417-residue chain is Probable medium-chain specific acyl-CoA dehydrogenase 10, mitochondrial (417 aa).

The transit peptide at 1 to 15 directs the protein to the mitochondrion; it reads MLSRIATSSLGLSRS. FAD contacts are provided by residues 148 to 157 and 181 to 183; these read YCVTEPGAGS and WIT. Ser157 provides a ligand contact to substrate. 268–271 serves as a coordination point for substrate; the sequence is DMTR. FAD is bound by residues 306-307 and 364-368; these read HQ and QIFGG. The active-site Proton acceptor is the Glu391. Gly392 provides a ligand contact to substrate. 393 to 395 is an FAD binding site; it reads TSQ.

Belongs to the acyl-CoA dehydrogenase family. In terms of assembly, homotetramer. It depends on FAD as a cofactor. As to expression, expressed in the epidermis and intestine.

The protein localises to the mitochondrion matrix. The enzyme catalyses a medium-chain 2,3-saturated fatty acyl-CoA + oxidized [electron-transfer flavoprotein] + H(+) = a medium-chain (2E)-enoyl-CoA + reduced [electron-transfer flavoprotein]. It participates in lipid metabolism; mitochondrial fatty acid beta-oxidation. Its function is as follows. This enzyme is specific for acyl chain lengths of 4 to 16. The protein is Probable medium-chain specific acyl-CoA dehydrogenase 10, mitochondrial (acdh-10) of Caenorhabditis elegans.